A 162-amino-acid polypeptide reads, in one-letter code: MASPRTVTIVALSVTLGLFFVFMGTIKLTPRLSKDAYSEMKRAYKSYVKALPALKKIGISSVFLRKAIGSLELACGIVLTLVPGRPKDVANFILLLLVLIVLFFHQLVGDPLKRYAHALVFGILLTCRLLVSRQPEEEFPEKKLSRGNNGAHSREPIKMKVS.

Over 1-5 the chain is Cytoplasmic; that stretch reads MASPR. A helical transmembrane segment spans residues 6–26; the sequence is TVTIVALSVTLGLFFVFMGTI. The Lumenal portion of the chain corresponds to 27 to 61; it reads KLTPRLSKDAYSEMKRAYKSYVKALPALKKIGISS. Residues 62 to 82 form a helical membrane-spanning segment; that stretch reads VFLRKAIGSLELACGIVLTLV. Topologically, residues 83–88 are cytoplasmic; sequence PGRPKD. The chain crosses the membrane as a helical span at residues 89 to 109; that stretch reads VANFILLLLVLIVLFFHQLVG. Residues 110–114 are Lumenal-facing; sequence DPLKR. Residues 115–131 traverse the membrane as a helical segment; sequence YAHALVFGILLTCRLLV. Over 132–162 the chain is Cytoplasmic; sequence SRQPEEEFPEKKLSRGNNGAHSREPIKMKVS. The segment at 141 to 162 is disordered; that stretch reads EKKLSRGNNGAHSREPIKMKVS. Over residues 152–162 the composition is skewed to basic and acidic residues; that stretch reads HSREPIKMKVS.

Belongs to the DoxX family.

It localises to the peroxisome membrane. Its subcellular location is the cytoplasmic vesicle. The protein localises to the endoplasmic reticulum membrane. Functionally, molecular chaperone which mediates the proper assembly and functional expression of the nicotinic acetylcholine receptors (nAChRs) throughout the brain. Essential for the proper folding, assembly, function and surface trafficking of alpha-7 (CHRNA7), alpha-4-beta-2, alpha-3-beta-2 and alpha-3-beta-4 receptors. The sequence is that of Novel acetylcholine receptor chaperone (tmem35a) from Xenopus tropicalis (Western clawed frog).